We begin with the raw amino-acid sequence, 502 residues long: Bone morphogenetic protein receptor type-1B (502 aa).

The first 13 residues, 1–13, serve as a signal peptide directing secretion; that stretch reads MLLRSSGKLNVGT. The segment at 1–24 is disordered; sequence MLLRSSGKLNVGTKKEDGESTAPT. Residues 14 to 126 are Extracellular-facing; it reads KKEDGESTAP…DFVDGPIHHK (113 aa). 5 disulfide bridges follow: Cys32–Cys53, Cys34–Cys38, Cys47–Cys71, Cys81–Cys95, and Cys96–Cys102. The chain crosses the membrane as a helical span at residues 127–148; sequence ALLISVTVCSLLLVLIILFCYF. Residues 149–502 lie on the Cytoplasmic side of the membrane; that stretch reads RYKRQEARPR…KMSESQDIKL (354 aa). The region spanning 174 to 203 is the GS domain; the sequence is ESLRDLIEQSQSSGSGSGLPLLVQRTIAKQ. The 291-residue stretch at 204 to 494 folds into the Protein kinase domain; the sequence is IQMVKQIGKG…LRVKKTLAKM (291 aa). ATP-binding positions include 210-218 and Lys231; that span reads IGKGRYGEV. The active-site Proton acceptor is the Asp332.

Belongs to the protein kinase superfamily. TKL Ser/Thr protein kinase family. TGFB receptor subfamily. In terms of assembly, interacts with high affinity with GDF5; positively regulates chondrocyte differentiation. Interacts with SCUBE3. Interacts with TSC22D1/TSC-22. Interacts with TGFBR3. Mg(2+) serves as cofactor. The cofactor is Mn(2+). Post-translationally, autophosphorylated.

It localises to the cell membrane. The enzyme catalyses L-threonyl-[receptor-protein] + ATP = O-phospho-L-threonyl-[receptor-protein] + ADP + H(+). The catalysed reaction is L-seryl-[receptor-protein] + ATP = O-phospho-L-seryl-[receptor-protein] + ADP + H(+). Its function is as follows. On ligand binding, forms a receptor complex consisting of two type II and two type I transmembrane serine/threonine kinases. Type II receptors phosphorylate and activate type I receptors which autophosphorylate, then bind and activate SMAD transcriptional regulators. Receptor for BMP7/OP-1. Receptor for GDF5. Positively regulates chondrocyte differentiation through GDF5 interaction. This Mus musculus (Mouse) protein is Bone morphogenetic protein receptor type-1B (Bmpr1b).